The sequence spans 158 residues: Transcription elongation factor GreA (158 aa).

Residues 8 to 74 adopt a coiled-coil conformation; the sequence is TKGGYNKLKD…TLERVLSTAT (67 aa).

It belongs to the GreA/GreB family.

Its function is as follows. Necessary for efficient RNA polymerase transcription elongation past template-encoded arresting sites. The arresting sites in DNA have the property of trapping a certain fraction of elongating RNA polymerases that pass through, resulting in locked ternary complexes. Cleavage of the nascent transcript by cleavage factors such as GreA or GreB allows the resumption of elongation from the new 3'terminus. GreA releases sequences of 2 to 3 nucleotides. The chain is Transcription elongation factor GreA from Chloroherpeton thalassium (strain ATCC 35110 / GB-78).